A 313-amino-acid chain; its full sequence is 4-hydroxy-3-methylbut-2-enyl diphosphate reductase (313 aa).

[4Fe-4S] cluster is bound at residue C12. 2 residues coordinate (2E)-4-hydroxy-3-methylbut-2-enyl diphosphate: H41 and H74. H41 and H74 together coordinate dimethylallyl diphosphate. Isopentenyl diphosphate contacts are provided by H41 and H74. Residue C96 participates in [4Fe-4S] cluster binding. H124 contacts (2E)-4-hydroxy-3-methylbut-2-enyl diphosphate. Dimethylallyl diphosphate is bound at residue H124. An isopentenyl diphosphate-binding site is contributed by H124. The Proton donor role is filled by E126. A (2E)-4-hydroxy-3-methylbut-2-enyl diphosphate-binding site is contributed by T167. C197 contacts [4Fe-4S] cluster. Residues S225, S226, N227, and S269 each contribute to the (2E)-4-hydroxy-3-methylbut-2-enyl diphosphate site. 4 residues coordinate dimethylallyl diphosphate: S225, S226, N227, and S269. Residues S225, S226, N227, and S269 each contribute to the isopentenyl diphosphate site.

It belongs to the IspH family. It depends on [4Fe-4S] cluster as a cofactor.

The enzyme catalyses isopentenyl diphosphate + 2 oxidized [2Fe-2S]-[ferredoxin] + H2O = (2E)-4-hydroxy-3-methylbut-2-enyl diphosphate + 2 reduced [2Fe-2S]-[ferredoxin] + 2 H(+). It catalyses the reaction dimethylallyl diphosphate + 2 oxidized [2Fe-2S]-[ferredoxin] + H2O = (2E)-4-hydroxy-3-methylbut-2-enyl diphosphate + 2 reduced [2Fe-2S]-[ferredoxin] + 2 H(+). Its pathway is isoprenoid biosynthesis; dimethylallyl diphosphate biosynthesis; dimethylallyl diphosphate from (2E)-4-hydroxy-3-methylbutenyl diphosphate: step 1/1. The protein operates within isoprenoid biosynthesis; isopentenyl diphosphate biosynthesis via DXP pathway; isopentenyl diphosphate from 1-deoxy-D-xylulose 5-phosphate: step 6/6. Functionally, catalyzes the conversion of 1-hydroxy-2-methyl-2-(E)-butenyl 4-diphosphate (HMBPP) into a mixture of isopentenyl diphosphate (IPP) and dimethylallyl diphosphate (DMAPP). Acts in the terminal step of the DOXP/MEP pathway for isoprenoid precursor biosynthesis. In Photobacterium profundum (strain SS9), this protein is 4-hydroxy-3-methylbut-2-enyl diphosphate reductase.